Reading from the N-terminus, the 88-residue chain is MAIKVRLPASINQGDLEIDAEKLTVNQLIALLSQITGKDLEKILKRDGELSPFISIFVNGRNVRYAEGLETEVRSGDEVSIVPTVAGG.

It belongs to the sulfur carrier protein CysO family.

The polypeptide is Putative sulfur carrier protein AF_0552 (Archaeoglobus fulgidus (strain ATCC 49558 / DSM 4304 / JCM 9628 / NBRC 100126 / VC-16)).